A 968-amino-acid chain; its full sequence is Protein translocase subunit SecA 1 (968 aa).

ATP is bound by residues glutamine 86, 104-108 (GEGKT), and aspartate 493. 2 stretches are compositionally biased toward basic and acidic residues: residues 858 to 868 (EAEKTEDKAED) and 883 to 898 (ESAK…ESVA). Residues 858 to 968 (EAEKTEDKAE…KCHGAPKSRV (111 aa)) form a disordered region. The Zn(2+) site is built by cysteine 949, cysteine 951, cysteine 960, and histidine 961. Basic residues predominate over residues 955-968 (KKYKKCHGAPKSRV).

Belongs to the SecA family. In terms of assembly, monomer and homodimer. Part of the essential Sec protein translocation apparatus which comprises SecA, SecYEG and auxiliary proteins SecDF. Other proteins may also be involved. Zn(2+) is required as a cofactor.

Its subcellular location is the cell membrane. The protein localises to the cytoplasm. The catalysed reaction is ATP + H2O + cellular proteinSide 1 = ADP + phosphate + cellular proteinSide 2.. Part of the Sec protein translocase complex. Interacts with the SecYEG preprotein conducting channel. Has a central role in coupling the hydrolysis of ATP to the transfer of proteins into and across the cell membrane, serving as an ATP-driven molecular motor driving the stepwise translocation of polypeptide chains across the membrane. In Thermobifida fusca (strain YX), this protein is Protein translocase subunit SecA 1.